A 480-amino-acid chain; its full sequence is Probable cobyric acid synthase (480 aa).

A GATase cobBQ-type domain is found at 246–431; sequence PVRIAVIRLP…MHGLFLNPSA (186 aa). The Nucleophile role is filled by C325. H423 is a catalytic residue.

The protein belongs to the CobB/CobQ family. CobQ subfamily.

The protein operates within cofactor biosynthesis; adenosylcobalamin biosynthesis. Catalyzes amidations at positions B, D, E, and G on adenosylcobyrinic A,C-diamide. NH(2) groups are provided by glutamine, and one molecule of ATP is hydrogenolyzed for each amidation. The polypeptide is Probable cobyric acid synthase (Methanoregula boonei (strain DSM 21154 / JCM 14090 / 6A8)).